The following is a 556-amino-acid chain: MFDKLPYEIFKQIAWRIPQEDKISLTYVCKRSYESIIPFIYQNLFLNETYHINGDYDNSFGTCYWSVLNFHYIDEDDSNTKNDMSNRRLAKVKFSYFERTLAESPKRLCPLINRIRCTWHLNEDVMTNVLKLLSEYGSNLKFVDQFVRSSVNKGLEPLSKQLKTLTLTPPTLMPTHNSVSGSYLNKIDRLLLKCDLSRLEKLSIHINALKYFKNTGSPMKIKALVLNLRPDTLNLAEYDASDDFLKELEYIDIFDASTLRQLEILSWYSRDDFPSGEEGGFDRLYVKWGLEGFWKFPNIEKLSLASLVYSEFFLMNCLAVFHNLKILKLDYMGKFDFDVSLINFLSKQVCGKKLQRFDIHCQLNHRLFFPMTDNPLTRLNFDGFCPCSTCKNTIHEVILKKIFPETRSKLLKNPNKFQAHNFFYQMFFENKIMPYTNIIDNESPAMGWDSVPIETFVRKFNENLQSTIENTENITVNKITREDAISLYHLYLHYLKDVFKVFEQSLPNLEYLTINGIPTKIIQVDELQRCAVPLFYNNGYKSNSVYELVDAEALFS.

The F-box domain maps to 1–44 (MFDKLPYEIFKQIAWRIPQEDKISLTYVCKRSYESIIPFIYQNL).

Interacts with SKP1. Component of the probable SCF(YDR131C) complex containing CDC53, SKP1, RBX1 and YDR131C.

The protein localises to the vacuole. It participates in protein modification; protein ubiquitination. In terms of biological role, substrate recognition component of a SCF (SKP1-CUL1-F-box protein) E3 ubiquitin-protein ligase complex which mediates the ubiquitination and subsequent proteasomal degradation of target proteins. Probably recognizes and binds to phosphorylated target proteins. The sequence is that of F-box protein YDR131C from Saccharomyces cerevisiae (strain ATCC 204508 / S288c) (Baker's yeast).